The following is a 431-amino-acid chain: Isochorismate synthase MenF (431 aa).

Lysine 190 serves as the catalytic Proton acceptor. Glutamate 240 (proton donor) is an active-site residue. Mg(2+) is bound by residues glutamate 284 and glutamate 416.

Belongs to the isochorismate synthase family. Homodimer. Mg(2+) serves as cofactor.

The catalysed reaction is chorismate = isochorismate. The protein operates within quinol/quinone metabolism; 1,4-dihydroxy-2-naphthoate biosynthesis; 1,4-dihydroxy-2-naphthoate from chorismate: step 1/7. It functions in the pathway quinol/quinone metabolism; menaquinone biosynthesis. Catalyzes the conversion of chorismate to isochorismate. Can also catalyze the reverse reaction, but with a lower efficiency. The chain is Isochorismate synthase MenF from Escherichia coli (strain K12).